The sequence spans 94 residues: Large ribosomal subunit protein bL25 (94 aa).

The segment at 1–20 (MFKFNAEVRQSQGKGASRRL) is disordered.

It belongs to the bacterial ribosomal protein bL25 family. Part of the 50S ribosomal subunit; part of the 5S rRNA/L5/L18/L25 subcomplex. Contacts the 5S rRNA. Binds to the 5S rRNA independently of L5 and L18.

Functionally, this is one of the proteins that binds to the 5S RNA in the ribosome where it forms part of the central protuberance. The protein is Large ribosomal subunit protein bL25 of Pasteurella multocida (strain Pm70).